The primary structure comprises 665 residues: ELMO family protein LMO1 (665 aa).

In terms of assembly, forms an active heterodimer with DCK1.

It is found in the cytoplasm. Its subcellular location is the mitochondrion. Functionally, forms a transiant heterodimeric complex with DCK1, that acts as a guanine nucleotide exchange factor (GEF) for the small GTPase RHO5. DCK1, LMO1 and RHO5 relocate to mitochondria upon oxidative stress and trigger cell death. The DCK1/LMO1/RHO5 signaling module mediates mitochondrial turnover under nitrogen starvation conditions via mitophagy. The DCK1/LMO1/RHO5 signaling module also plays a role in cell wall integrity signaling. This Saccharomyces cerevisiae (strain ATCC 204508 / S288c) (Baker's yeast) protein is ELMO family protein LMO1.